The following is a 695-amino-acid chain: NADPH--cytochrome P450 reductase (695 aa).

Residues M1–D8 lie on the Lumenal side of the membrane. The chain crosses the membrane as a helical span at residues L9 to V31. Residues A32–S695 lie on the Cytoplasmic side of the membrane. In terms of domain architecture, Flavodoxin-like spans C66–W221. FMN is bound by residues S72–A77, A123–G126, L169–N178, and D204. Residues H277 to P538 enclose the FAD-binding FR-type domain. R296 is an NADP(+) binding site. FAD-binding positions include R451–S454, T469–V471, and G486–T489. Residues T552, S614–R615, K620–Q624, and E656 each bind NADP(+). Position 694 (W694) interacts with FAD.

The protein belongs to the NADPH--cytochrome P450 reductase family. In the N-terminal section; belongs to the flavodoxin family. It in the C-terminal section; belongs to the flavoprotein pyridine nucleotide cytochrome reductase family. The cofactor is FAD. FMN serves as cofactor.

It is found in the endoplasmic reticulum membrane. Its subcellular location is the mitochondrion outer membrane. The protein resides in the cell membrane. It carries out the reaction 2 oxidized [cytochrome P450] + NADPH = 2 reduced [cytochrome P450] + NADP(+) + H(+). This enzyme is required for electron transfer from NADP to cytochrome P450 in microsomes. It can also provide electron transfer to heme oxygenase and cytochrome B5. Involved in ergosterol biosynthesis. This chain is NADPH--cytochrome P450 reductase, found in Aspergillus niger (strain ATCC MYA-4892 / CBS 513.88 / FGSC A1513).